The chain runs to 311 residues: tRNA-cytidine(32) 2-sulfurtransferase (311 aa).

A PP-loop motif motif is present at residues 47 to 52; it reads SGGKDS. [4Fe-4S] cluster contacts are provided by C122, C125, and C213.

Belongs to the TtcA family. Homodimer. The cofactor is Mg(2+). [4Fe-4S] cluster serves as cofactor.

The protein resides in the cytoplasm. The enzyme catalyses cytidine(32) in tRNA + S-sulfanyl-L-cysteinyl-[cysteine desulfurase] + AH2 + ATP = 2-thiocytidine(32) in tRNA + L-cysteinyl-[cysteine desulfurase] + A + AMP + diphosphate + H(+). It functions in the pathway tRNA modification. Catalyzes the ATP-dependent 2-thiolation of cytidine in position 32 of tRNA, to form 2-thiocytidine (s(2)C32). The sulfur atoms are provided by the cysteine/cysteine desulfurase (IscS) system. In Pectobacterium carotovorum subsp. carotovorum (strain PC1), this protein is tRNA-cytidine(32) 2-sulfurtransferase.